A 504-amino-acid polypeptide reads, in one-letter code: ATP synthase subunit alpha (504 aa).

ATP is bound at residue glycine 172–threonine 179.

The protein belongs to the ATPase alpha/beta chains family. F-type ATPases have 2 components, CF(1) - the catalytic core - and CF(0) - the membrane proton channel. CF(1) has five subunits: alpha(3), beta(3), gamma(1), delta(1), epsilon(1). CF(0) has three main subunits: a(1), b(2) and c(9-12). The alpha and beta chains form an alternating ring which encloses part of the gamma chain. CF(1) is attached to CF(0) by a central stalk formed by the gamma and epsilon chains, while a peripheral stalk is formed by the delta and b chains.

It localises to the cell inner membrane. It carries out the reaction ATP + H2O + 4 H(+)(in) = ADP + phosphate + 5 H(+)(out). Its function is as follows. Produces ATP from ADP in the presence of a proton gradient across the membrane. The alpha chain is a regulatory subunit. The sequence is that of ATP synthase subunit alpha from Petrotoga mobilis (strain DSM 10674 / SJ95).